The chain runs to 358 residues: Vesicular integral-membrane protein VIP36 (358 aa).

The signal sequence occupies residues 1-46; that stretch reads MAAEAWLWRWGWGWGQRCPGRPGLPGPGPSPTTFLHLLLLLGPVAA. Residues 47–324 lie on the Lumenal side of the membrane; the sequence is DITDGNSEHL…FRNGPLTGWR (278 aa). In terms of domain architecture, L-type lectin-like spans 54 to 278; sequence EHLKREHSLI…DIISIKLFQL (225 aa). A carbohydrate contacts are provided by serine 98 and aspartate 133. 3 residues coordinate Ca(2+): aspartate 164, tyrosine 166, and asparagine 168. 166–168 provides a ligand contact to a carbohydrate; the sequence is YPN. N-linked (GlcNAc...) asparagine glycosylation occurs at asparagine 185. Histidine 192 is an a carbohydrate binding site. Aspartate 195 contacts Ca(2+). Cysteine 204 and cysteine 241 are oxidised to a cystine. Position 262–264 (262–264) interacts with a carbohydrate; that stretch reads GDL. The helical transmembrane segment at 325-347 threads the bilayer; that stretch reads VFLLLLCALLGVVVCAVVGAVVF. Over 348–358 the chain is Cytoplasmic; it reads QKRQERNKRFY.

Ca(2+) serves as cofactor.

It localises to the golgi apparatus membrane. Plays a role as an intracellular lectin in the early secretory pathway. Interacts with N-acetyl-D-galactosamine and high-mannose type glycans and may also bind to O-linked glycans. Involved in the transport and sorting of glycoproteins carrying high mannose-type glycans. In Mus musculus (Mouse), this protein is Vesicular integral-membrane protein VIP36 (Lman2).